Reading from the N-terminus, the 721-residue chain is Mitogen-activated protein kinase 6 (721 aa).

Residue Met1 forms a Peptide (Met-Gly) (interchain with G-Cter in ubiquitin) linkage. In terms of domain architecture, Protein kinase spans 20–316 (YMDLKPLGCG…AEEALSHPYM (297 aa)). ATP is bound by residues 26 to 34 (LGCGGNGLV) and Lys49. Asp152 serves as the catalytic Proton acceptor. Ser189 is subject to Phosphoserine; by PAK1, PAK2 and PAK3. The short motif at 189–191 (SEG) is the SEG motif element. The FRIEDE motif motif lies at 332–337 (FHIEDE). Residues Ser386, Ser452, Ser556, Ser558, Ser665, and Ser684 each carry the phosphoserine modification. A compositionally biased stretch (polar residues) spans 701-715 (AMKSSPQIPHQTYSS). The segment at 701–721 (AMKSSPQIPHQTYSSILKHLN) is disordered.

This sequence belongs to the protein kinase superfamily. CMGC Ser/Thr protein kinase family. MAP kinase subfamily. In terms of assembly, heterodimer with ERK4/MAPK4. Interacts with (via FRIEDE motif) MAPKAPK5. Interacts with UBE3A; this interaction may be indirect and mediated by HERC2, possibly via HERC2 interaction with NEURL4. Requires Mg(2+) as cofactor. In terms of processing, phosphorylated at Ser-189 by PAK1, PAK2 and PAK3 resulting in catalytic activation. Phosphorylated by MAPKAPK5 at other sites. Ubiquitination at Met-1 leads to degradation by the proteasome pathway. As to expression, highest expression in the skeletal muscle, followed by the brain. Also found in heart, placenta, lung, liver, pancreas, kidney and skin fibroblasts.

It is found in the cytoplasm. The protein resides in the nucleus. It catalyses the reaction L-seryl-[protein] + ATP = O-phospho-L-seryl-[protein] + ADP + H(+). The catalysed reaction is L-threonyl-[protein] + ATP = O-phospho-L-threonyl-[protein] + ADP + H(+). Its activity is regulated as follows. Activated by phosphorylation at Ser-189. Its function is as follows. Atypical MAPK protein. Phosphorylates microtubule-associated protein 2 (MAP2) and MAPKAPK5. The precise role of the complex formed with MAPKAPK5 is still unclear, but the complex follows a complex set of phosphorylation events: upon interaction with atypical MAPKAPK5, ERK3/MAPK6 is phosphorylated at Ser-189 and then mediates phosphorylation and activation of MAPKAPK5, which in turn phosphorylates ERK3/MAPK6. May promote entry in the cell cycle. The chain is Mitogen-activated protein kinase 6 (MAPK6) from Homo sapiens (Human).